A 130-amino-acid polypeptide reads, in one-letter code: Small ribosomal subunit protein uS11 (130 aa).

The protein belongs to the universal ribosomal protein uS11 family. As to quaternary structure, part of the 30S ribosomal subunit. Interacts with proteins S7 and S18. Binds to IF-3.

Located on the platform of the 30S subunit, it bridges several disparate RNA helices of the 16S rRNA. Forms part of the Shine-Dalgarno cleft in the 70S ribosome. This Prochlorococcus marinus (strain NATL2A) protein is Small ribosomal subunit protein uS11.